Consider the following 387-residue polypeptide: TSC22 domain family protein 4 (387 aa).

Disordered stretches follow at residues 1–85 and 135–232; these read MSGG…GEPY and ISTP…RRDG. The segment covering 28-51 has biased composition (pro residues); that stretch reads SDPPAPPAPAGPPPRLPNGEPNPD. The residue at position 57 (T57) is a Phosphothreonine. Phosphoserine occurs at positions 62 and 165. Phosphothreonine is present on T183. Phosphoserine occurs at positions 187 and 189. Residue T223 is modified to Phosphothreonine. 3 positions are modified to phosphoserine: S254, S258, and S271. Residues 336–357 form a leucine-zipper region; the sequence is LKEQIRDLAERNAALEQENGLL. A Phosphoserine modification is found at S362. A disordered region spans residues 368-387; the sequence is QLPSSGLPRLGPSAPNGPSI.

The protein belongs to the TSC-22/Dip/Bun family. As to quaternary structure, forms a homodimer or heterodimer. Forms a heterodimer with TSC22D1 isoforms 1 and 2. Interacts with NRBP1.

The protein localises to the nucleus. Its subcellular location is the cytoplasm. It localises to the cell projection. It is found in the dendrite. The protein resides in the synapse. In terms of biological role, binds DNA and acts as a transcriptional repressor. Involved in the regulation of systematic glucose homeostasis and insulin sensitivity, via transcriptional repression of downstream insulin signaling targets such as OBP2A/LCN13. Acts as a negative regulator of lipogenic gene expression in hepatocytes and thereby mediates the control of very low-density lipoprotein release. May play a role in neurite elongation and survival. The sequence is that of TSC22 domain family protein 4 from Rattus norvegicus (Rat).